A 461-amino-acid chain; its full sequence is L-seryl-tRNA(Sec) selenium transferase (461 aa).

K294 bears the N6-(pyridoxal phosphate)lysine mark.

Belongs to the SelA family. Pyridoxal 5'-phosphate is required as a cofactor.

It is found in the cytoplasm. It carries out the reaction L-seryl-tRNA(Sec) + selenophosphate + H(+) = L-selenocysteinyl-tRNA(Sec) + phosphate. It functions in the pathway aminoacyl-tRNA biosynthesis; selenocysteinyl-tRNA(Sec) biosynthesis; selenocysteinyl-tRNA(Sec) from L-seryl-tRNA(Sec) (bacterial route): step 1/1. Converts seryl-tRNA(Sec) to selenocysteinyl-tRNA(Sec) required for selenoprotein biosynthesis. The chain is L-seryl-tRNA(Sec) selenium transferase from Haemophilus influenzae (strain PittEE).